A 3412-amino-acid polypeptide reads, in one-letter code: Genome polyprotein (3412 aa).

The interval 2–15 (SKKPGKPGRNRVVN) is interaction with host EXOC1. Residues 2 to 108 (SKKPGKPGRN…PSKKRGGTRS (107 aa)) lie on the Cytoplasmic side of the membrane. Residues 37 to 72 (LLDGRGPVRFILAILTFFRFTALQPTEALKRRWRAV) form a hydrophobic; homodimerization of capsid protein C region. The propeptide at 104–121 (GGTRSLLGLAALIGLASS) is ER anchor for the capsid protein C, removed in mature form by serine protease NS3. The chain crosses the membrane as a helical span at residues 109–129 (LLGLAALIGLASSLQLSTYQG). Residues 130 to 247 (KVLMSINKTD…TTKYLTKVEN (118 aa)) are Extracellular-facing. Residue Asn-136 is glycosylated (N-linked (GlcNAc...) asparagine; by host). Residues 248–268 (WVLRNPGYALVALAIGWMLGS) traverse the membrane as a helical segment. The Cytoplasmic segment spans residues 269 to 273 (NNTQR). The helical transmembrane segment at 274 to 288 (VVFVIMLMLIAPAYS) threads the bilayer. Topologically, residues 289-741 (FNCLGTSNRD…QVFGGAFRTL (453 aa)) are extracellular. 8 disulfide bridges follow: Cys-291–Cys-318, Cys-348–Cys-404, Cys-348–Cys-409, Cys-362–Cys-393, Cys-380–Cys-404, Cys-380–Cys-409, Cys-478–Cys-576, and Cys-593–Cys-624. The tract at residues 386–399 (DRGWGNGCGLFGKG) is fusion peptide. The chain crosses the membrane as a helical span at residues 742 to 762 (FGGMSWITQGLLGALLLWMGL). Topologically, residues 763–768 (QARDRS) are cytoplasmic. Residues 769 to 789 (ISLTLLAVGGILIFLATSVQA) form a helical membrane-spanning segment. Residues 790–1214 (DSGCAIDLQR…AFAEMNTGGD (425 aa)) are Extracellular-facing. Cystine bridges form between Cys-793/Cys-804 and Cys-844/Cys-932. Residues Asn-919, Asn-964, and Asn-996 are each glycosylated (N-linked (GlcNAc...) asparagine; by host). Cystine bridges form between Cys-968/Cys-1012, Cys-1069/Cys-1118, Cys-1080/Cys-1101, Cys-1080/Cys-1102, Cys-1101/Cys-1105, and Cys-1102/Cys-1105. A helical membrane pass occupies residues 1215 to 1235 (VIHLALVAVFKVQPAFLAGLF). Residues 1236 to 1245 (LRMQWSNQEN) are Cytoplasmic-facing. Residues 1246 to 1266 (ILMVIGAAFLQMAANDLKLEV) form a helical membrane-spanning segment. Residues 1267–1288 (LPILNAMSIAWMLIRAMKEGKV) are Lumenal-facing. Residues 1289–1303 (AMYALPILCALTPGM) form a helical membrane-spanning segment. Arg-1304 is a topological domain (cytoplasmic). Residues 1305–1325 (MAGLDVIRCLLLIIGIVTLLN) form a helical membrane-spanning segment. Over 1326 to 1339 (ERRESVAKKKGGYL) the chain is Lumenal. The helical transmembrane segment at 1340–1360 (LAAALCQAGVCSPLIMMGGLI) threads the bilayer. Residues 1361-1369 (LAHPNGKRS) lie on the Cytoplasmic side of the membrane. The chain crosses the membrane as a helical span at residues 1370–1390 (WPASEVLTGVGLMCALAGGLL). At 1391–1393 (EFE) the chain is on the lumenal side. A helical membrane pass occupies residues 1394 to 1414 (ETSMVVPFAIAGLMYITYTVS). The Cytoplasmic segment spans residues 1415-1471 (GKAAEMWIEKAADITWEQNAEITGTSPRLDVDLDSHGNFKLLNDPGAPVHLFALRFI). The tract at residues 1422–1461 (IEKAADITWEQNAEITGTSPRLDVDLDSHGNFKLLNDPGA) is interacts with and activates NS3 protease. An intramembrane region (helical) is located at residues 1472–1492 (LLGLSARFHWFIPFGVLGFWL). At 1493–2167 (LGKHSKRGGA…KEALAELPDS (675 aa)) the chain is on the cytoplasmic side. In terms of domain architecture, Peptidase S7 spans 1500-1677 (GGALWDVPSP…ERTEEPIPDA (178 aa)). Catalysis depends on charge relay system; for serine protease NS3 activity residues His-1550, Asp-1574, and Ser-1634. One can recognise a Helicase ATP-binding domain in the interval 1680-1836 (EEMLRKRKLT…DSNSPILDVE (157 aa)). Residues 1684–1687 (RKRK) form an important for RNA-binding region. Residue 1693–1700 (LHPGAGKT) coordinates ATP. The DEAH box signature appears at 1784 to 1787 (DEAH). Residues 1847–2011 (GYEWITNFTG…GLVAQMYQPE (165 aa)) enclose the Helicase C-terminal domain. The interval 2162 to 2166 (AELPD) is regulates the ATPase activity of NS3 helicase. A helical transmembrane segment spans residues 2168–2188 (LETLLLIGMLCVMSMGTFIFL). Over 2189 to 2193 (MNRKG) the chain is Lumenal. Residues 2194-2214 (VGKMGLGAFVMTLATALLWAA) constitute an intramembrane region (helical). Glu-2215 is a topological domain (lumenal). The helical transmembrane segment at 2216 to 2236 (VPGTQIAGVLLIVFLLMIVLI) threads the bilayer. Residues 2237–2251 (PEPEKQRSQTDNQLA) lie on the Cytoplasmic side of the membrane. A helical transmembrane segment spans residues 2252 to 2266 (VFLICIMTLMGVVAA). Residues 2267–2308 (NEMGLLEKTKSDIAKLFGSQPGSVGFATRTTPWDISLDIKPA) lie on the Lumenal side of the membrane. Residues 2309 to 2329 (TAWALYAAATMVMTPLIKHLI) constitute an intramembrane region (helical). Topologically, residues 2330–2376 (TTQYVNFSLTAIASQAGVLLGLTNGMPFTAMDLSVPLLVLGCWNQMT) are lumenal. The chain crosses the membrane as a helical span at residues 2377 to 2397 (LPSLAVAVMLLAIHYAFMIPG). Topologically, residues 2398–2440 (WQAEAMRAAQRRTAAGIMKNAVVDGIVATDIPDLSPATPMTEK) are cytoplasmic. A helical membrane pass occupies residues 2441 to 2461 (KMGQILLIAAAVLAVLVRPGI). Topologically, residues 2462–2466 (CSIKE) are lumenal. A helical transmembrane segment spans residues 2467-2487 (FGVLGSAALVTLIEGTAGVVW). Residues 2488–3412 (NCTTAVGLCN…IGEEEYRDYM (925 aa)) lie on the Cytoplasmic side of the membrane. One can recognise an mRNA cap 0-1 NS5-type MT domain in the interval 2525–2790 (GGGKGATLGE…DVNLGSGTRS (266 aa)). Ser-2580 lines the S-adenosyl-L-methionine pocket. Position 2580 is a phosphoserine (Ser-2580). The active-site For 2'-O-MTase activity is Lys-2585. S-adenosyl-L-methionine-binding residues include Gly-2610, Trp-2611, Thr-2628, Lys-2629, Asp-2655, and Val-2656. Asp-2670 serves as the catalytic For 2'-O-MTase activity. Position 2671 (Ile-2671) interacts with S-adenosyl-L-methionine. Catalysis depends on for 2'-O-MTase activity residues Lys-2706 and Glu-2742. Residue Tyr-2744 participates in S-adenosyl-L-methionine binding. Residues 2771–2780 (QNRSGPRYEE) are compositionally biased toward basic and acidic residues. A disordered region spans residues 2771-2791 (QNRSGPRYEEDVNLGSGTRSV). Zn(2+) is bound by residues Glu-2964, His-2968, Cys-2973, and Cys-2976. One can recognise a RdRp catalytic domain in the interval 3054–3206 (GKMYADDTAG…KPIDDRFATA (153 aa)). Residues His-3241, Cys-3257, and Cys-3376 each coordinate Zn(2+).

In the N-terminal section; belongs to the class I-like SAM-binding methyltransferase superfamily. mRNA cap 0-1 NS5-type methyltransferase family. As to quaternary structure, homodimer. Interacts (via N-terminus) with host EXOC1 (via C-terminus); this interaction results in EXOC1 degradation through the proteasome degradation pathway. In terms of assembly, forms heterodimers with envelope protein E in the endoplasmic reticulum and Golgi. Homodimer; in the endoplasmic reticulum and Golgi. Interacts with protein prM. Interacts with non-structural protein 1. As to quaternary structure, homodimer; Homohexamer when secreted. Interacts with envelope protein E. NS1 interacts with NS4B. Interacts with host complement protein CFH; this interaction leads to the degradation of C3. In terms of assembly, interacts (via N-terminus) with serine protease NS3. Forms a heterodimer with serine protease NS3. May form homooligomers. As to quaternary structure, forms a heterodimer with NS2B. Interacts with non-structural protein 2A (via N-terminus). Interacts with NS4B. Interacts with unphosphorylated RNA-directed RNA polymerase NS5; this interaction stimulates RNA-directed RNA polymerase NS5 guanylyltransferase activity. In terms of assembly, interacts with serine protease NS3. Homodimer. Interacts with host STAT2; this interaction inhibits the phosphorylation of the latter, and, when all viral proteins are present (polyprotein), targets STAT2 for degradation. Interacts with serine protease NS3. Specific enzymatic cleavages in vivo yield mature proteins. Cleavages in the lumen of endoplasmic reticulum are performed by host signal peptidase, whereas cleavages in the cytoplasmic side are performed by serine protease NS3. Signal cleavage at the 2K-4B site requires a prior NS3 protease-mediated cleavage at the 4A-2K site. In terms of processing, cleaved in post-Golgi vesicles by a host furin, releasing the mature small envelope protein M, and peptide pr. This cleavage is incomplete as up to 30% of viral particles still carry uncleaved prM. Post-translationally, N-glycosylated. N-glycosylated. The excreted form is glycosylated and this is required for efficient secretion of the protein from infected cells. In terms of processing, phosphorylated on serines residues. This phosphorylation may trigger NS5 nuclear localization.

It is found in the virion. The protein localises to the host nucleus. It localises to the host cytoplasm. The protein resides in the host perinuclear region. Its subcellular location is the secreted. It is found in the virion membrane. The protein localises to the host endoplasmic reticulum membrane. The enzyme catalyses Selective hydrolysis of -Xaa-Xaa-|-Yaa- bonds in which each of the Xaa can be either Arg or Lys and Yaa can be either Ser or Ala.. It carries out the reaction RNA(n) + a ribonucleoside 5'-triphosphate = RNA(n+1) + diphosphate. It catalyses the reaction a ribonucleoside 5'-triphosphate + H2O = a ribonucleoside 5'-diphosphate + phosphate + H(+). The catalysed reaction is ATP + H2O = ADP + phosphate + H(+). The enzyme catalyses a 5'-end (5'-triphosphoguanosine)-ribonucleoside in mRNA + S-adenosyl-L-methionine = a 5'-end (N(7)-methyl 5'-triphosphoguanosine)-ribonucleoside in mRNA + S-adenosyl-L-homocysteine. It carries out the reaction a 5'-end (N(7)-methyl 5'-triphosphoguanosine)-ribonucleoside in mRNA + S-adenosyl-L-methionine = a 5'-end (N(7)-methyl 5'-triphosphoguanosine)-(2'-O-methyl-ribonucleoside) in mRNA + S-adenosyl-L-homocysteine + H(+). In terms of biological role, plays a role in virus budding by binding to the cell membrane and gathering the viral RNA into a nucleocapsid that forms the core of a mature virus particle. During virus entry, may induce genome penetration into the host cytoplasm after hemifusion induced by the surface proteins. Can migrate to the cell nucleus where it modulates host functions. Overcomes the anti-viral effects of host EXOC1 by sequestering and degrading the latter through the proteasome degradation pathway. Its function is as follows. Inhibits RNA silencing by interfering with host Dicer. Prevents premature fusion activity of envelope proteins in trans-Golgi by binding to envelope protein E at pH6.0. After virion release in extracellular space, gets dissociated from E dimers. Functionally, acts as a chaperone for envelope protein E during intracellular virion assembly by masking and inactivating envelope protein E fusion peptide. prM is the only viral peptide matured by host furin in the trans-Golgi network probably to avoid catastrophic activation of the viral fusion activity in acidic Golgi compartment prior to virion release. prM-E cleavage is inefficient, and many virions are only partially matured. These uncleaved prM would play a role in immune evasion. In terms of biological role, may play a role in virus budding. Exerts cytotoxic effects by activating a mitochondrial apoptotic pathway through M ectodomain. May display a viroporin activity. Its function is as follows. Binds to host cell surface receptor and mediates fusion between viral and cellular membranes. Envelope protein is synthesized in the endoplasmic reticulum in the form of heterodimer with protein prM. They play a role in virion budding in the ER, and the newly formed immature particle is covered with 60 spikes composed of heterodimer between precursor prM and envelope protein E. The virion is transported to the Golgi apparatus where the low pH causes dissociation of PrM-E heterodimers and formation of E homodimers. prM-E cleavage is inefficient, and many virions are only partially matured. These uncleaved prM would play a role in immune evasion. Involved in immune evasion, pathogenesis and viral replication. Once cleaved off the polyprotein, is targeted to three destinations: the viral replication cycle, the plasma membrane and the extracellular compartment. Essential for viral replication. Required for formation of the replication complex and recruitment of other non-structural proteins to the ER-derived membrane structures. Excreted as a hexameric lipoparticle that plays a role against host immune response. Antagonizing the complement function. Binds to the host macrophages and dendritic cells. Inhibits signal transduction originating from Toll-like receptor 3 (TLR3). Functionally, component of the viral RNA replication complex that functions in virion assembly and antagonizes the host alpha/beta interferon antiviral response. In terms of biological role, required cofactor for the serine protease function of NS3. May have membrane-destabilizing activity and form viroporins. Its function is as follows. Displays three enzymatic activities: serine protease, NTPase and RNA helicase. NS3 serine protease, in association with NS2B, performs its autocleavage and cleaves the polyprotein at dibasic sites in the cytoplasm: C-prM, NS2A-NS2B, NS2B-NS3, NS3-NS4A, NS4A-2K and NS4B-NS5. NS3 RNA helicase binds RNA and unwinds dsRNA in the 3' to 5' direction. Regulates the ATPase activity of the NS3 helicase activity. NS4A allows NS3 helicase to conserve energy during unwinding. Functionally, functions as a signal peptide for NS4B and is required for the interferon antagonism activity of the latter. In terms of biological role, induces the formation of ER-derived membrane vesicles where the viral replication takes place. Inhibits interferon (IFN)-induced host STAT1 phosphorylation and nuclear translocation, thereby preventing the establishment of cellular antiviral state by blocking the IFN-alpha/beta pathway. Inhibits STAT2 translocation in the nucleus after IFN-alpha treatment. Its function is as follows. Replicates the viral (+) and (-) RNA genome, and performs the capping of genomes in the cytoplasm. NS5 methylates viral RNA cap at guanine N-7 and ribose 2'-O positions. Besides its role in RNA genome replication, also prevents the establishment of cellular antiviral state by blocking the interferon-alpha/beta (IFN-alpha/beta) signaling pathway. Inhibits host TYK2 and STAT2 phosphorylation, thereby preventing activation of JAK-STAT signaling pathway. The chain is Genome polyprotein from Agelaius tricolor (Tricolored blackbird).